A 364-amino-acid chain; its full sequence is DNA replication and repair protein RecF (364 aa).

Residue 30–37 (GNNAQGKT) coordinates ATP.

Belongs to the RecF family.

Its subcellular location is the cytoplasm. The RecF protein is involved in DNA metabolism; it is required for DNA replication and normal SOS inducibility. RecF binds preferentially to single-stranded, linear DNA. It also seems to bind ATP. The polypeptide is DNA replication and repair protein RecF (Streptococcus uberis (strain ATCC BAA-854 / 0140J)).